We begin with the raw amino-acid sequence, 84 residues long: Putative membrane protein insertion efficiency factor (84 aa).

The protein belongs to the UPF0161 family.

The protein resides in the cell inner membrane. Its function is as follows. Could be involved in insertion of integral membrane proteins into the membrane. In Acidiphilium cryptum (strain JF-5), this protein is Putative membrane protein insertion efficiency factor.